A 496-amino-acid chain; its full sequence is Solute carrier family 2, facilitated glucose transporter member 3 (496 aa).

At 1–10 the chain is on the cytoplasmic side; sequence MGTQKVTPAL. A helical transmembrane segment spans residues 11–32; sequence IFAITVATIGSFQFGYNTGVIN. Residues 33–64 are Extracellular-facing; it reads APEKIIKEFINKTLTDKGNAPPSEVLLTSLWS. N43 carries N-linked (GlcNAc...) asparagine glycosylation. Residues 65–85 traverse the membrane as a helical segment; it reads LSVAIFSVGGMIGSFSVGLFV. At 86–90 the chain is on the cytoplasmic side; that stretch reads NRFGR. The chain crosses the membrane as a helical span at residues 91–111; it reads RNSMLIVNLLAVTGGCFMGLC. The Extracellular segment spans residues 112–118; the sequence is KVAKSVE. A helical membrane pass occupies residues 119-142; sequence MLILGRLIIGLFCGLCTGFVPMYI. At 143–153 the chain is on the cytoplasmic side; it reads GEISPTALRGA. A helical transmembrane segment spans residues 154–174; it reads FGTLNQLGIVVGILVAQIFGL. A D-glucose-binding site is contributed by Q159. Residues 175–183 are Extracellular-facing; it reads EFILGSEEL. Residues 184–204 traverse the membrane as a helical segment; sequence WPLLLGFTILPTILQSAALPF. At 205-269 the chain is on the cytoplasmic side; the sequence is CPESPRFLLI…LFRVSSYRQP (65 aa). T232 bears the Phosphothreonine mark. A helical membrane pass occupies residues 270 to 290; sequence IIISIVLQLSQQLSGINAVFY. The interval 277-279 is important for selectivity against fructose; sequence QLS. D-glucose-binding positions include 280–281 and N286; that span reads QQ. Residues 291–304 are Extracellular-facing; the sequence is YSTGIFKDAGVQEP. A helical membrane pass occupies residues 305-325; the sequence is IYATIGAGVVNTIFTVVSLFL. D-glucose is bound at residue N315. The Cytoplasmic segment spans residues 326 to 331; the sequence is VERAGR. A helical transmembrane segment spans residues 332-352; sequence RTLHMIGLGGMAFCSTLMTVS. Topologically, residues 353–363 are extracellular; sequence LLLKDNYNGMS. A helical membrane pass occupies residues 364-389; it reads FVCIGAILVFVAFFEIGPGPIPWFIV. D-glucose is bound by residues E378 and W386. The Cytoplasmic portion of the chain corresponds to 390–399; it reads AELFSQGPRP. The helical transmembrane segment at 400–420 threads the bilayer; it reads AAMAVAGCSNWTSNFLVGLLF. Over 421–429 the chain is Extracellular; that stretch reads PSAAHYLGA. The chain crosses the membrane as a helical span at residues 430-450; it reads YVFIIFTGFLITFLAFTFFKV. The Cytoplasmic segment spans residues 451–496; it reads PETRGRTFEDITRAFEGQAHGADRSGKDGVMEVNSIEPAKETTTNV. S475 and S485 each carry phosphoserine. T492 bears the Phosphothreonine mark.

This sequence belongs to the major facilitator superfamily. Sugar transporter (TC 2.A.1.1) family. Glucose transporter subfamily. Interacts with SMIM43; the interaction may promote SLC2A3-mediated glucose transport to meet the energy needs of mesendoderm differentiation.

It localises to the cell membrane. It is found in the perikaryon. The protein resides in the cell projection. It carries out the reaction D-glucose(out) = D-glucose(in). It catalyses the reaction D-galactose(in) = D-galactose(out). Its activity is regulated as follows. Deoxyglucose transport is inhibited by D-glucose, D-galactose and maltose. Galactose transport is inhibited by D-glucose and maltose. Facilitative glucose transporter. Can also mediate the uptake of various other monosaccharides across the cell membrane. Mediates the uptake of glucose, 2-deoxyglucose, galactose, mannose, xylose and fucose, and probably also dehydroascorbate. Does not mediate fructose transport. Required for mesendoderm differentiation. The protein is Solute carrier family 2, facilitated glucose transporter member 3 of Pongo abelii (Sumatran orangutan).